Here is a 1321-residue protein sequence, read N- to C-terminus: Insulin receptor substrate 2 (1321 aa).

The segment covering 1-10 (MASAPLPGPP) has biased composition (pro residues). 2 disordered regions span residues 1–32 (MASA…HSVR) and 51–73 (RGPG…PPRL). Residues 16 to 144 (DGPNLNNNNN…WYRALTDLVS (129 aa)) form the PH domain. Over residues 18 to 28 (PNLNNNNNNNN) the composition is skewed to low complexity. The 105-residue stretch at 191–295 (YREVWQVNLK…EAMKALKELF (105 aa)) folds into the IRS-type PTB domain. Positions 299-536 (PRSKSQSSGS…ARDGSGGELY (238 aa)) are disordered. Residues S303 and S343 each carry the phosphoserine modification. At T347 the chain carries Phosphothreonine. Phosphoserine is present on S362. Residues 364-376 (GDGGAAGGAGTAG) show a composition bias toward gly residues. S381, S385, and S388 each carry phosphoserine. Residue R409 is modified to Omega-N-methylarginine. Low complexity-rich tracts occupy residues 435-456 (SPPA…SGSY) and 478-490 (PSSG…GSPS). The residue at position 517 (T517) is a Phosphothreonine. S520 carries the post-translational modification Phosphoserine. Position 524 is a phosphothreonine (T524). Phosphotyrosine; by INSR is present on Y536. The short motif at 536–539 (YGYM) is the YXXM motif 1 element. A Phosphoserine; by PLK1 modification is found at S556. At S573 the chain carries Phosphoserine. Phosphothreonine occurs at positions 575 and 576. S590 is modified (phosphoserine). The YXXM motif 2 signature appears at 594–597 (YTLM). A phosphoserine mark is found at S604 and S616. Position 649 is a phosphotyrosine (Y649). Short sequence motifs (YXXM motif) lie at residues 649-652 (YMPM) and 671-674 (YMPM). At Y671 the chain carries Phosphotyrosine; by INSR. Phosphoserine is present on residues S675, S678, S727, and S728. Residues 734-737 (YMRM) carry the YXXM motif 5 motif. Residue S762 is modified to Phosphoserine. Residue T771 is modified to Phosphothreonine. Position 796 is a phosphoserine (S796). Residues 814 to 817 (YVLM) carry the YXXM motif 6 motif. S819 is modified (phosphoserine). 2 disordered regions span residues 834–871 (ATPG…RPEG) and 888–1091 (EGLQ…ASPT). S907 bears the Phosphoserine mark. Y911 is subject to Phosphotyrosine; by INSR. Positions 930–959 (LLASAASSSSLLSASSPASSLGSGTPGTSS) are enriched in low complexity. At S965 the chain carries Phosphoserine. Y970 carries the post-translational modification Phosphotyrosine; by INSR. Residues 1005–1014 (PYPPLPPRPS) are compositionally biased toward pro residues. Residues 1039-1055 (AATSQGPTAGSSMSSEP) are compositionally biased toward polar residues. The short motif at 1061-1064 (YTEM) is the YXXM motif 7 element. Phosphothreonine is present on T1071. The span at 1072–1082 (PPQPIVAPPKP) shows a compositional bias: pro residues. S1089 carries the phosphoserine modification. S1098 is subject to Phosphoserine; by PLK1. The tract at residues 1110–1198 (LQVSQPPDPH…TSPGQAQPLV (89 aa)) is disordered. Over residues 1139-1154 (ETFSSTTTVTPVSPSF) the composition is skewed to low complexity. T1148 is subject to Phosphothreonine. Residues S1151, S1163, S1165, S1175, and S1190 each carry the phosphoserine modification. The span at 1163 to 1179 (SASVENVSLRKSSEGSS) shows a compositional bias: polar residues. Y1242 is modified (phosphotyrosine; by INSR). The interval 1251–1275 (QGSLAQSQPQPGDKNSWSRTRSLGG) is disordered. The segment covering 1253 to 1271 (SLAQSQPQPGDKNSWSRTR) has biased composition (polar residues). Phosphotyrosine; by INSR is present on Y1303. A Glycyl lysine isopeptide (Lys-Gly) (interchain with G-Cter in ubiquitin) cross-link involves residue K1314.

In terms of assembly, interacts with PHIP. Interacts with SH2B1; this interaction enhances leptin-induced activation of the PI3-kinase pathway. Interacts with GRB2. Interacts with PIK3R1. Interacts with DVL2; this interaction promotes the Wnt/beta-catenin signaling pathway. In terms of processing, phosphorylation fluctuates in a cell-cycle dependent manner with hyperphosphorylation during mitosis. Phosphorylated at Ser-556 and Ser-1098 by PLK1; these phosphorylations prevent the activation of the PI3K pathway upon growth factor stimulation by inhibiting the binding between IRS2 and the PI3K pathway components and increasing the level of IRS2 protein degradation. In addition, they prevent premature mitotic exit. Monoubiquitinated by NEDD4; leading to enhanced IGF1 signaling. During cell cycle, ubiquitination and proteasomal degradation are controlled by FZR1. Skeletal muscle, lung, brain, liver, kidney, heart and spleen.

It localises to the cytoplasm. The protein localises to the cytosol. In terms of biological role, signaling adapter protein that participates in the signal transduction from two prominent receptor tyrosine kinases, insulin receptor/INSR and insulin-like growth factor I receptor/IGF1R. Plays therefore an important role in development, growth, glucose homeostasis as well as lipid metabolism. Upon phosphorylation by the insulin receptor, functions as a signaling scaffold that propagates insulin action through binding to SH2 domain-containing proteins including the p85 regulatory subunit of PI3K, NCK1, NCK2, GRB2 or SHP2. Recruitment of GRB2 leads to the activation of the guanine nucleotide exchange factor SOS1 which in turn triggers the Ras/Raf/MEK/MAPK signaling cascade. Activation of the PI3K/AKT pathway is responsible for most of insulin metabolic effects in the cell, and the Ras/Raf/MEK/MAPK is involved in the regulation of gene expression and in cooperation with the PI3K pathway regulates cell growth and differentiation. Acts a positive regulator of the Wnt/beta-catenin signaling pathway through suppression of DVL2 autophagy-mediated degradation leading to cell proliferation. Plays a role in cell cycle progression by promoting a robust spindle assembly checkpoint (SAC) during M-phase. In macrophages, IL4-induced tyrosine phosphorylation of IRS2 leads to the recruitment and activation of phosphoinositide 3-kinase (PI3K). In Mus musculus (Mouse), this protein is Insulin receptor substrate 2 (Irs2).